The chain runs to 338 residues: Large ribosomal subunit protein uL10 (338 aa).

The segment at 292–338 is disordered; it reads LDDDLKERVSSTASAVEAKEEEAPKEEKEEEKEEEEEAPAAGLGMLF. The segment covering 308 to 318 has biased composition (basic and acidic residues); that stretch reads EAKEEEAPKEE. Over residues 319-329 the composition is skewed to acidic residues; sequence KEEEKEEEEEA.

This sequence belongs to the universal ribosomal protein uL10 family. Part of the 50S ribosomal subunit. Forms part of the ribosomal stalk which helps the ribosome interact with GTP-bound translation factors. Forms a heptameric L10(L12)2(L12)2(L12)2 complex, where L10 forms an elongated spine to which the L12 dimers bind in a sequential fashion.

Its function is as follows. Forms part of the ribosomal stalk, playing a central role in the interaction of the ribosome with GTP-bound translation factors. The protein is Large ribosomal subunit protein uL10 of Methanococcus aeolicus (strain ATCC BAA-1280 / DSM 17508 / OCM 812 / Nankai-3).